The chain runs to 361 residues: Phosphoserine aminotransferase (361 aa).

R43 provides a ligand contact to L-glutamate. Pyridoxal 5'-phosphate-binding positions include 77 to 78 (AS), W103, T153, D173, and Q196. An N6-(pyridoxal phosphate)lysine modification is found at K197. Pyridoxal 5'-phosphate is bound at residue 238-239 (NT).

The protein belongs to the class-V pyridoxal-phosphate-dependent aminotransferase family. SerC subfamily. Homodimer. The cofactor is pyridoxal 5'-phosphate.

The protein resides in the cytoplasm. It carries out the reaction O-phospho-L-serine + 2-oxoglutarate = 3-phosphooxypyruvate + L-glutamate. The catalysed reaction is 4-(phosphooxy)-L-threonine + 2-oxoglutarate = (R)-3-hydroxy-2-oxo-4-phosphooxybutanoate + L-glutamate. The protein operates within amino-acid biosynthesis; L-serine biosynthesis; L-serine from 3-phospho-D-glycerate: step 2/3. Its pathway is cofactor biosynthesis; pyridoxine 5'-phosphate biosynthesis; pyridoxine 5'-phosphate from D-erythrose 4-phosphate: step 3/5. Catalyzes the reversible conversion of 3-phosphohydroxypyruvate to phosphoserine and of 3-hydroxy-2-oxo-4-phosphonooxybutanoate to phosphohydroxythreonine. The polypeptide is Phosphoserine aminotransferase (Ectopseudomonas mendocina (strain ymp) (Pseudomonas mendocina)).